Here is a 1308-residue protein sequence, read N- to C-terminus: Spermatogenesis-associated protein 31F1B (1308 aa).

Residues 7–27 (FLWDTECPLYVYFCFFIIVLI) form a helical membrane-spanning segment. Disordered regions lie at residues 464–488 (SPPIPLPEAAPPPSSTSPNESLDEP), 627–648 (SQPGKPEAYGSGDTFLPTAGKG), 844–863 (HGAQGHGRTEKVPPERQPLL), 902–927 (PTATDLESESVQEPLGSPRESTLLQG), 1005–1026 (FSTESQSPGKSKSGYVPTVAGK), 1084–1190 (GACP…AGLK), and 1204–1254 (MKSK…PKAQ). The segment covering 465–478 (PPIPLPEAAPPPSS) has biased composition (pro residues). Positions 1107–1117 (METDSEQDMED) are enriched in acidic residues.

The protein belongs to the SPATA31 family.

The protein resides in the membrane. The protein is Spermatogenesis-associated protein 31F1B of Mus musculus (Mouse).